Reading from the N-terminus, the 657-residue chain is Penicillin-binding protein activator LpoA (657 aa).

Positions Met-1 to Ala-25 are cleaved as a signal peptide. Cys-26 is lipidated: N-palmitoyl cysteine. Residue Cys-26 is the site of S-diacylglycerol cysteine attachment.

The protein belongs to the LpoA family. As to quaternary structure, interacts with PBP1a.

It is found in the cell outer membrane. Functionally, regulator of peptidoglycan synthesis that is essential for the function of penicillin-binding protein 1A (PBP1a). The sequence is that of Penicillin-binding protein activator LpoA from Yersinia pestis bv. Antiqua (strain Angola).